A 910-amino-acid polypeptide reads, in one-letter code: Protein translocase subunit SecA (910 aa).

ATP contacts are provided by residues Q89, 107–111, and D502; that span reads GEGKT. Zn(2+) is bound by residues C894, C896, C905, and H906.

This sequence belongs to the SecA family. As to quaternary structure, monomer and homodimer. Part of the essential Sec protein translocation apparatus which comprises SecA, SecYEG and auxiliary proteins SecDF-YajC and YidC. Requires Zn(2+) as cofactor.

Its subcellular location is the cell inner membrane. The protein localises to the cytoplasm. The catalysed reaction is ATP + H2O + cellular proteinSide 1 = ADP + phosphate + cellular proteinSide 2.. Functionally, part of the Sec protein translocase complex. Interacts with the SecYEG preprotein conducting channel. Has a central role in coupling the hydrolysis of ATP to the transfer of proteins into and across the cell membrane, serving both as a receptor for the preprotein-SecB complex and as an ATP-driven molecular motor driving the stepwise translocation of polypeptide chains across the membrane. This chain is Protein translocase subunit SecA, found in Mesorhizobium japonicum (strain LMG 29417 / CECT 9101 / MAFF 303099) (Mesorhizobium loti (strain MAFF 303099)).